The primary structure comprises 638 residues: Polypeptide N-acetylgalactosaminyltransferase 15 (638 aa).

At 1–12 the chain is on the cytoplasmic side; it reads MLPRKRPRSGRS. A helical; Signal-anchor for type II membrane protein membrane pass occupies residues 13 to 35; sequence RLQFLLLFLTLGCVLMMVILLHP. Residues 36-638 are Lumenal-facing; sequence PPPTLHQAVT…FDQIHPVDER (603 aa). The disordered stretch occupies residues 134 to 157; it reads KDWRTEEDGEESEEVLTPLGPDSD. 5 cysteine pairs are disulfide-bonded: Cys-181–Cys-411, Cys-402–Cys-481, Cys-516–Cys-535, Cys-561–Cys-574, and Cys-602–Cys-619. The segment at 190–299 is catalytic subdomain A; it reads LPTASVILCF…PGWLEPLLSR (110 aa). Positions 231 and 260 each coordinate substrate. Residues Asp-283, His-285, and His-416 each coordinate Mn(2+). Residues 357–419 form a catalytic subdomain B region; it reads PVRSPVVPRE…PCSRVGHIYR (63 aa). Arg-419 lines the substrate pocket. One can recognise a Ricin B-type lectin domain in the interval 503–630; that stretch reads RFSGKLHNTG…GKTSQLWRFD (128 aa). An N-linked (GlcNAc...) asparagine glycan is attached at Asn-573.

The protein belongs to the glycosyltransferase 2 family. GalNAc-T subfamily. Requires Mn(2+) as cofactor. In terms of tissue distribution, specifically expressed in testis.

The protein resides in the golgi apparatus membrane. The enzyme catalyses L-seryl-[protein] + UDP-N-acetyl-alpha-D-galactosamine = a 3-O-[N-acetyl-alpha-D-galactosaminyl]-L-seryl-[protein] + UDP + H(+). It catalyses the reaction L-threonyl-[protein] + UDP-N-acetyl-alpha-D-galactosamine = a 3-O-[N-acetyl-alpha-D-galactosaminyl]-L-threonyl-[protein] + UDP + H(+). It participates in protein modification; protein glycosylation. Its function is as follows. Catalyzes the initial reaction in O-linked oligosaccharide biosynthesis, the transfer of an N-acetyl-D-galactosamine residue to a serine or threonine residue on the protein receptor. Although it displays a much weaker activity toward all substrates tested compared to GALNT2, it is able to transfer up to seven GalNAc residues to the Muc5AC peptide, suggesting that it can fill vicinal Thr/Ser residues in cooperation with other GALNT proteins. Prefers Muc1a as substrate. This chain is Polypeptide N-acetylgalactosaminyltransferase 15 (Galnt15), found in Mus musculus (Mouse).